A 1357-amino-acid polypeptide reads, in one-letter code: MSYSFAEKKRIRKSFAKRASILPFPFLLATQIQSYTDFLQAEIAPGKRKNQGLQAAFNSVFPIESHSNNARLDFISYMLGSPVFDVKECQQRGLTYAAPLRARVRLTILDKEASKPTVKEVKEQEVYMGEIPLMTDTGSFVVNGTERVIVSQLHRSPGVFFEHDRGKTHSSGKLLFSARIIPYRGSWLDFEFDPKDYVYFRIDRRRKMPVTTLLKAMGYSPAQILADFFEFDHFILVDNKIFFNLIPERLRGELAGFDIVSEDGKVFVQKDKRITAKHVRDLQQANLTKIPVPEEFLLGKILAADLVDKETGEIIALANSEISETLLGRIRQTQSSEISTLFVNDLNYGPYISQTLRIDETTDQMSAQVAIYRMMRPGEPPTEEAVLALFNGLFYSPERYDLSVVGRMKFNRRVGREELTGSTTLSNDDIIDVIKILVELRNGRGEIDDIDHLGNRRVRSVGELAENQFRAGLARVEKAVKERLSQAESENLMPHDFINAKPVSSAIREFFGSSQLSQFMDQTNPLSEVTHKRRISALGPGGLTRERAGFEVRDVHPTHYGRVCPIETPEGPNIGLINSLALYARTNEYGFIETPYRMVRNGRVTEEVVYLSAIEESQYVIAQANANFDQNGVFTDEVVSCRHKNEFTLASRDQIEYVDIAPAQIVSVAASLIPFLEHDDANRALMGSNMQRQAVPCLRAEKPLVGTGIERVVAVHSGTAVRTIRGGVVDYVDASRIVIRVHDAEARAGEVGVDIYNLTKYTRSNQNTNINQRPIVRMGDVLSRDDVIADGASTDLGELALGQNMLIAFMPWNGLNFEDSILISERVVSDDRFTSIHIEELAAVSRDTKLGTEEITADIPNLSERQRARLDESGIVYIGAEVEAGDVLVGKVTPKSETQLTPEEKLLRAIFGEKASDVKDTSLHVPAGISGTVIDVQIFTREGVDRDKRSKQIIADELGRFKKDLADQMRIVEADAFQRAERLLTGKVAAGGPKKLAKNSTITRDYLENVEKHHWFDIRLVDENTSLQLEQIKDSLVQKRKLFDLAFEEKHRKLSQGDELPPGVQKMVKVYIAVKRRLQSGDKMAGRHGNKGVISKIVPIEDMPYMADGTPVDVVLNPLGVPSRMNIGQVLEVHLGWAAKELGKRVNEMLASQRNVSDIRDFLNKIYNNSGKQEDLTSLEDDEVLALARNLSSGVPFATPVFDGAHESEIKQMLKLAGLPESGQTTLYDGRTGEAFDRPVTVGYMHVLKLHHLVDDKMHARSTGPYSLVTQQPLGGKAQFGGQRFGEMEVWALEAYGASYTLQEMLTVKSDDVNGRTKVYESIVKGDHKIDAGMPESFNVLVKEIRSLGLDIDLEEH.

It belongs to the RNA polymerase beta chain family. The RNAP catalytic core consists of 2 alpha, 1 beta, 1 beta' and 1 omega subunit. When a sigma factor is associated with the core the holoenzyme is formed, which can initiate transcription.

It carries out the reaction RNA(n) + a ribonucleoside 5'-triphosphate = RNA(n+1) + diphosphate. DNA-dependent RNA polymerase catalyzes the transcription of DNA into RNA using the four ribonucleoside triphosphates as substrates. This chain is DNA-directed RNA polymerase subunit beta, found in Nitrosomonas europaea (strain ATCC 19718 / CIP 103999 / KCTC 2705 / NBRC 14298).